The primary structure comprises 377 residues: Homoserine O-succinyltransferase (377 aa).

Residues Asn50–Leu358 form the AB hydrolase-1 domain. Catalysis depends on Ser156, which acts as the Nucleophile. Arg226 is a substrate binding site. Catalysis depends on residues Asp321 and His354. Asp355 provides a ligand contact to substrate.

This sequence belongs to the AB hydrolase superfamily. MetX family. As to quaternary structure, homodimer.

It is found in the cytoplasm. It catalyses the reaction L-homoserine + succinyl-CoA = O-succinyl-L-homoserine + CoA. It participates in amino-acid biosynthesis; L-methionine biosynthesis via de novo pathway; O-succinyl-L-homoserine from L-homoserine: step 1/1. Functionally, transfers a succinyl group from succinyl-CoA to L-homoserine, forming succinyl-L-homoserine. This Nitrosomonas eutropha (strain DSM 101675 / C91 / Nm57) protein is Homoserine O-succinyltransferase.